We begin with the raw amino-acid sequence, 143 residues long: Putative pre-16S rRNA nuclease (143 aa).

This sequence belongs to the YqgF nuclease family.

The protein localises to the cytoplasm. In terms of biological role, could be a nuclease involved in processing of the 5'-end of pre-16S rRNA. The polypeptide is Putative pre-16S rRNA nuclease (Lactobacillus gasseri (strain ATCC 33323 / DSM 20243 / BCRC 14619 / CIP 102991 / JCM 1131 / KCTC 3163 / NCIMB 11718 / NCTC 13722 / AM63)).